The sequence spans 200 residues: ATP synthase subunit s, mitochondrial (200 aa).

Residues 1-25 (MMLFGKISQQLCGLKKLPWSRDSRY) constitute a mitochondrion transit peptide. Residues 1–61 (MMLFGKISQQ…SEWLLRCGAM (61 aa)) form an N-terminal domain region. Residue Gly-59 coordinates Mg(2+). LRR repeat units lie at residues 62–87 (VRYH…KYKI), 88–116 (QAID…KIRL), 117–141 (CKCH…KSML), and 142–173 (EMEI…LSDL). Thr-93 contributes to the Mg(2+) binding site.

The protein belongs to the ATP synthase subunit s family. As to quaternary structure, homotetramer. Associates with ATP synthase.

It localises to the mitochondrion. The protein localises to the mitochondrion inner membrane. Its function is as follows. Involved in regulation of mitochondrial membrane ATP synthase. Necessary for H(+) conduction of ATP synthase. Facilitates energy-driven catalysis of ATP synthesis by blocking a proton leak through an alternative proton exit pathway. This is ATP synthase subunit s, mitochondrial (DMAC2L) from Bos taurus (Bovine).